The sequence spans 786 residues: Digalactosyldiacylglycerol synthase 1, chloroplastic (786 aa).

A chloroplast-targeting transit peptide spans 1–25 (MASQRQPPSSSNAFSFLSKGWREVR).

This sequence belongs to the glycosyltransferase group 1 family. Glycosyltransferase 4 subfamily. High expression in nodules infected cells, but low in nodule inner cortex and root central cylinder.

Its subcellular location is the plastid. It is found in the chloroplast outer membrane. It localises to the plastid outer membrane. The enzyme catalyses a 1,2-diacyl-3-O-(beta-D-galactosyl)-sn-glycerol + UDP-alpha-D-galactose = a 1,2-diacyl-3-O-[alpha-D-galactosyl-(1-&gt;6)-beta-D-galactosyl]-sn-glycerol + UDP + H(+). Involved in the synthesis of diacylglycerol galactolipids that are specifically found in thylakoid and in nodule peribacteroid membranes. Specific for alpha-glycosidic linkages. The sequence is that of Digalactosyldiacylglycerol synthase 1, chloroplastic from Lotus japonicus (Lotus corniculatus var. japonicus).